Reading from the N-terminus, the 650-residue chain is Probable ATP-dependent RNA helicase DDX17 (650 aa).

The disordered stretch occupies residues M1 to L38. Over residues G7 to G16 the composition is skewed to basic and acidic residues. Residues K29, K30, and K42 each carry the N6-acetyllysine modification. Residue K50 forms a Glycyl lysine isopeptide (Lys-Gly) (interchain with G-Cter in SUMO); alternate linkage. K50 participates in a covalent cross-link: Glycyl lysine isopeptide (Lys-Gly) (interchain with G-Cter in SUMO1); alternate. K50 is covalently cross-linked (Glycyl lysine isopeptide (Lys-Gly) (interchain with G-Cter in SUMO2); alternate). The Q motif motif lies at F92–C120. One can recognise a Helicase ATP-binding domain in the interval F123–I298. Residue A136 to T143 participates in ATP binding. The short motif at D246–D249 is the DEAD box element. Positions K326–V473 constitute a Helicase C-terminal domain. T444 is modified (phosphothreonine). Residue K449 forms a Glycyl lysine isopeptide (Lys-Gly) (interchain with G-Cter in SUMO2) linkage. Positions K468–K650 are transactivation domain. Disordered stretches follow at residues L472–P543 and A583–K650. The segment covering R489–L499 has biased composition (polar residues). The segment covering E504–R531 has biased composition (basic and acidic residues). Positions A583–Q609 are enriched in low complexity. An Omega-N-methylarginine modification is found at R605. The span at P610 to A619 shows a compositional bias: polar residues. A compositionally biased stretch (pro residues) spans Y638–K650. The segment at P639–P647 is interaction with YAP1.

The protein belongs to the DEAD box helicase family. DDX5/DBP2 subfamily. As to quaternary structure, interacts with DDX5 in an RNA-independent manner. Interacts with CDK9 transcription elongation complex under basal conditions. Following cell stimulation with poly(I:C), a synthetic double-stranded RNA mimicking viral infection, the interaction with CDK9 is decreased. Interacts with ESR1 in an estrogen-independent manner. Interacts with HNRNPH1; this interaction is important for the regulation of alternative splicing on G-quadruplex structures. At high, but not low, cell density, interacts with DROSHA and DGCR8, the core components of the microprocessor complex involved in the maturation of primary microRNAs (pri-miRNAs) into pre-miRNAs. The interaction with DGCR8 is reduced during mitosis. At low, but not high, cell density, interacts with YAP1 and with its paralog, WWTR1/TAZ. Interactions with DROSHA and YAP1 are mutually exclusive. In vitro, the pre-miRNA processing activity of the DDX17-containing microprocessor complex is weaker than that of the DROSHA/DGCR8 microprocessor complex. Interacts with UPF3B. Interacts with NFAT5; this interaction leads to DDX17 recruitment to LNC2 and S100A4 promoters and NFAT5-mediated DDX17-enhanced transactivation. Interacts with HDAC1, HDAC2 and HDAC3; this interaction with HDAC1 and HDAC3, but not HDAC2, depends upon DDX17 acetylation. Interacts with ZC3HAV1 (via N-terminal domain) in an RNA-independent manner. Interacts with EXOSC3/RRP40 and EXOSC5/RRP46; this interaction may be indirect and mediated by ZC3HAV1-binding. Interacts with EP300; this interaction leads to acetylation at lysine residues. Interacts with CREBBP/CBP and KAT2B/P/CAF. Directly interacts with CTNNB1. Interacts with MYOD1. Interacts with TP53. Interacts with DCP1A in an RNA-independent manner. Interacts with DCP2 in an RNA-dependent manner. Interacts with DHX36; this interaction occurs in a RNA-dependent manner. Interacts with ERCC6. Sumoylation significantly increases stability. It also promotes interaction specifically with HDAC1 (but not HDAC2, nor HDAC3) and strongly stimulates ESR1 and TP53 coactivation. Post-translationally, acetylation at lysine residues stabilizes the protein, stimulates interaction with HDAC1 and HDAC3, but not HDAC2, and represses ESR1 and TP53 coactivation activity.

It is found in the nucleus. Its subcellular location is the nucleolus. The protein localises to the cytoplasm. The protein resides in the cytosol. The catalysed reaction is ATP + H2O = ADP + phosphate + H(+). In terms of biological role, as an RNA helicase, unwinds RNA and alters RNA structures through ATP binding and hydrolysis. Involved in multiple cellular processes, including pre-mRNA splicing, alternative splicing, ribosomal RNA processing and miRNA processing, as well as transcription regulation. Regulates the alternative splicing of exons exhibiting specific features. This function requires the RNA helicase activity. Affects NFAT5 and histone macro-H2A.1/MACROH2A1 alternative splicing in a CDK9-dependent manner. Affects splicing of mediators of steroid hormone signaling pathway, including kinases that phosphorylates ESR1 and transcriptional regulators. By acting splicing of regulatory factors, participates in ESR1 and AR stabilization. Promotes the inclusion of specific AC-rich alternative exons in CD44 transcripts. In myoblasts and epithelial cells, cooperates with HNRNPH1 to control the splicing of specific subsets of exons. In addition to binding mature mRNAs, also interacts with certain pri-microRNAs, including MIR132/miR-132, and stabilizes the primary transcript. Also participates in the MIR132 processing, resulting in significantly higher levels of mature MIR132 than MIR212 despite the fact that both are cotranscribed and co-regulated. Binding of pri-microRNAs may occur on the 3' segment flanking the stem loop via the 5'-[ACG]CAUC[ACU]-3' consensus sequence. Participates in MYC down-regulation at high cell density through the production of MYC-targeting microRNAs. Along with DDX5, may be involved in the processing of the 32S intermediate into the mature 28S rRNA. Promoter-specific transcription regulator, functioning as a coactivator or corepressor depending on the context of the promoter and the transcriptional complex in which it exists. Enhances NFAT5 transcriptional activity. Synergizes with TP53 in the activation of the MDM2 promoter; this activity requires acetylation on lysine residues. May also coactivate MDM2 transcription through a TP53-independent pathway. Coactivates MMP7 transcription. Along with CTNNB1, coactivates MYC, JUN, FOSL1 and cyclin D1/CCND1 transcription. Alone or in combination with DDX5 and/or SRA1 non-coding RNA, plays a critical role in promoting the assembly of proteins required for the formation of the transcription initiation complex and chromatin remodeling leading to coactivation of MYOD1-dependent transcription. This helicase-independent activity is required for skeletal muscle cells to properly differentiate into myotubes. During epithelial-to-mesenchymal transition, coregulates SMAD-dependent transcriptional activity, directly controlling key effectors of differentiation, including miRNAs which in turn directly repress its expression. Plays a role in estrogen and testosterone signaling pathway at several levels. Mediates the use of alternative promoters in estrogen-responsive genes and regulates transcription and splicing of a large number of steroid hormone target genes. Contrary to the splicing regulation activity, transcriptional coregulation of the estrogen receptor ESR1 is helicase activity-independent. Plays a role in innate immunity. Specifically restricts bunyavirus infection, including Rift Valley fever virus (RVFV) or La Crosse virus (LACV), but not vesicular stomatitis virus (VSV), in an interferon- and DROSHA-independent manner. Binds to RVFV RNA, likely via structured viral RNA elements. Promotes mRNA degradation mediated by the antiviral zinc-finger protein ZC3HAV1, in an ATPase-dependent manner. In Mus musculus (Mouse), this protein is Probable ATP-dependent RNA helicase DDX17 (Ddx17).